The primary structure comprises 256 residues: Probable galactose dehydrogenase GalD (256 aa).

Residues 20-23 (GGGS), 71-72 (DL), and asparagine 98 each bind NAD(+). Serine 150 lines the substrate pocket. Tyrosine 163 serves as the catalytic Proton acceptor. NAD(+)-binding positions include 163 to 167 (YSTAK) and isoleucine 196.

This sequence belongs to the short-chain dehydrogenases/reductases (SDR) family.

In terms of biological role, involved in the degradation of galactose via the DeLey-Doudoroff pathway. Catalyzes the oxidation of galactose in the presence of NAD(+). Uses NAD(+) as a hydrogen acceptor more efficiently than NADP(+). This Rhizobium meliloti (strain 1021) (Ensifer meliloti) protein is Probable galactose dehydrogenase GalD (galD).